Here is a 427-residue protein sequence, read N- to C-terminus: Inward rectifier potassium channel 2 (427 aa).

Over 1–81 the chain is Cytoplasmic; the sequence is MGSVRTNRYS…IFTTCVDIRW (81 aa). The residue at position 76 (cysteine 76) is an S-nitrosocysteine. A helical membrane pass occupies residues 82 to 106; sequence RWMLVIFCLAFVLSWLFFGCVFWLI. Residues 107–128 lie on the Extracellular side of the membrane; that stretch reads ALLHGDLDASKESKACVSEVNS. Residues 129–140 constitute an intramembrane region (helical; Pore-forming); it reads FTAAFLFSIETQ. The segment at residues 141 to 147 is an intramembrane region (pore-forming); the sequence is TTIGYGF. Residues 142 to 147 carry the Selectivity filter motif; that stretch reads TIGYGF. The Extracellular portion of the chain corresponds to 148 to 156; that stretch reads RCVTDECPV. Residues 157–178 traverse the membrane as a helical segment; sequence AVFMVVFQSIVGCIIDAFIIGA. Residues 179 to 427 are Cytoplasmic-facing; that stretch reads VMAKMAKPKK…PRPLRRESEI (249 aa). The interval 181-208 is polyphosphoinositide (PIP2)-binding; that stretch reads AKMAKPKKRNETLVFSHNAVIAMRDGKL. The disordered stretch occupies residues 384–427; it reads SKEEDDSENGVPESTSTDTPPDLDLHNQASVPLEPRPLRRESEI. A PDZ-binding motif is present at residues 425–427; it reads SEI.

This sequence belongs to the inward rectifier-type potassium channel (TC 1.A.2.1) family. KCNJ2 subfamily. Homotetramer. Homomultimeric and heteromultimeric association with KCNJ4/Kir2.3. Can form heteromeric channels with Kir2.6/KCNJ18. Associates, via its PDZ-recognition domain, with a complex containing LIN7A, LIN7B, LIN7C, DLG1, CASK and APBA1. In terms of processing, S-nitrosylation increases the open probability and inward rectifying currents.

Its subcellular location is the cell membrane. The protein resides in the sarcolemma. It localises to the T-tubule. It carries out the reaction K(+)(in) = K(+)(out). Its activity is regulated as follows. Activated by phosphatidylinositol 4,5 biphosphate (PtdIns(4,5)P2). Its function is as follows. Inward rectifier potassium channels are characterized by a greater tendency to allow potassium to flow into the cell rather than out of it. Their voltage dependence is regulated by the concentration of extracellular potassium; as external potassium is raised, the voltage range of the channel opening shifts to more positive voltages. The inward rectification is mainly due to the blockage of outward current by internal magnesium. Blocked by external barium or cesium. Probably participates in establishing action potential waveform and excitability of neuronal and muscle tissues. This chain is Inward rectifier potassium channel 2 (KCNJ2), found in Canis lupus familiaris (Dog).